The primary structure comprises 362 residues: Probable tocopherol O-methyltransferase, chloroplastic (362 aa).

Residues 1 to 55 (MAHAAAATGALAPLHPLLRCTSRHLCASASPRAGLCLHHHRRRRRSSRRTKLAVR) constitute a chloroplast transit peptide. The SAM motif I stretch occupies residues 141 to 150 (VVDVGCGIGG). An SAM motif II region spans residues 204–212 (GQFDLVWSM). The segment at 231 to 240 (VAAPGARIII) is SAM motif III.

Belongs to the class I-like SAM-binding methyltransferase superfamily. gTMT family.

It is found in the plastid. The protein localises to the chloroplast. It catalyses the reaction gamma-tocopherol + S-adenosyl-L-methionine = (+)-alpha-tocopherol + S-adenosyl-L-homocysteine + H(+). The enzyme catalyses delta-tocotrienol + S-adenosyl-L-methionine = beta-tocotrienol + S-adenosyl-L-homocysteine + H(+). It carries out the reaction gamma-tocotrienol + S-adenosyl-L-methionine = alpha-tocotrienol + S-adenosyl-L-homocysteine + H(+). The catalysed reaction is delta-tocopherol + S-adenosyl-L-methionine = beta-tocopherol + S-adenosyl-L-homocysteine + H(+). It participates in cofactor biosynthesis; tocopherol biosynthesis. Functionally, involved in the synthesis of tocopherol (vitamin E). Methylates gamma- and delta-tocopherol to form beta- and alpha-tocopherol, respectively. The polypeptide is Probable tocopherol O-methyltransferase, chloroplastic (VTE4) (Oryza sativa subsp. japonica (Rice)).